The primary structure comprises 130 residues: Large ribosomal subunit protein bL21 (130 aa).

The tract at residues 110-130 is disordered; it reads TAPTATEETADATPDTETAAE.

The protein belongs to the bacterial ribosomal protein bL21 family. Part of the 50S ribosomal subunit. Contacts protein L20.

Its function is as follows. This protein binds to 23S rRNA in the presence of protein L20. In Nostoc sp. (strain PCC 7120 / SAG 25.82 / UTEX 2576), this protein is Large ribosomal subunit protein bL21.